Here is a 207-residue protein sequence, read N- to C-terminus: Glycerol-3-phosphate acyltransferase (207 aa).

Transmembrane regions (helical) follow at residues I2 to I22, M47 to A67, I72 to G92, F121 to V141, and L155 to I175.

It belongs to the PlsY family. In terms of assembly, probably interacts with PlsX.

It is found in the cell membrane. It carries out the reaction an acyl phosphate + sn-glycerol 3-phosphate = a 1-acyl-sn-glycero-3-phosphate + phosphate. It participates in lipid metabolism; phospholipid metabolism. Its function is as follows. Catalyzes the transfer of an acyl group from acyl-phosphate (acyl-PO(4)) to glycerol-3-phosphate (G3P) to form lysophosphatidic acid (LPA). This enzyme utilizes acyl-phosphate as fatty acyl donor, but not acyl-CoA or acyl-ACP. The protein is Glycerol-3-phosphate acyltransferase of Lacticaseibacillus casei (strain BL23) (Lactobacillus casei).